The sequence spans 222 residues: Disulfide bond formation protein D (222 aa).

A signal peptide spans 1–36 (MKKKQQSSAKFAVILTVVVVVLLAAIVIINNKTEQG). Residues 37-220 (NDAVSGQPSI…IKETIEKELK (184 aa)) form the Thioredoxin domain. A disulfide bridge links Cys-69 with Cys-72.

It belongs to the thioredoxin family. DsbA subfamily.

The protein localises to the cell membrane. It localises to the membrane raft. Required for the stabilization, possibly via formation of a disulfide bond, of the obligatory competence protein ComGC. May be required for the stability of secreted proteins with disulfide bonds. Not required for sporulation. This chain is Disulfide bond formation protein D (bdbD), found in Bacillus subtilis (strain 168).